Here is a 128-residue protein sequence, read N- to C-terminus: Calcitonin gene-related peptide 1 (128 aa).

A signal peptide spans M1–A25. Residues V26–Q80 constitute a propeptide that is removed on maturation. Cysteines 84 and 89 form a disulfide. F119 bears the Phenylalanine amide mark. A propeptide spanning residues D125 to A128 is cleaved from the precursor.

Belongs to the calcitonin family.

The protein resides in the secreted. Functionally, CGRP1/CALCA is a peptide hormone that induces vasodilation mediated by the CALCRL-RAMP1 receptor complex. Dilates a variety of vessels including the coronary, cerebral and systemic vasculature. Its abundance in the CNS also points toward a neurotransmitter or neuromodulator role. It also elevates platelet cAMP. CGRP1 can also bind and activate CALCR-RAMP1 (AMYR1) receptor complex. This chain is Calcitonin gene-related peptide 1, found in Rattus norvegicus (Rat).